Consider the following 735-residue polypeptide: Transcription initiation factor IIF subunit alpha (735 aa).

Disordered regions lie at residues 1 to 68 (MSRR…EYAE), 165 to 263 (EYKK…TANL), 297 to 323 (NEPEFEEGTMDPLADVAPDGGGRAKRG), 446 to 465 (KAVADQQAMDEDDRDDNSEV), 471 to 606 (EEFA…HKEP), and 631 to 674 (PEGE…EETP). Residues 33–54 (RMRMGQNGSNSSSPGVPNGDNS) are compositionally biased toward low complexity. Composition is skewed to basic and acidic residues over residues 59–68 (VKKDDPEYAE) and 165–174 (EYKKKAEQER). Polar residues predominate over residues 175 to 219 (STPNSGGMNKSGTVSLNNTVKDGSQTPTVDSVTKDNTANGVNSSI). Ser198 carries the phosphoserine modification. Position 200 is a phosphothreonine (Thr200). Over residues 220-238 (PTVTGSSVPPASPTTVSAV) the composition is skewed to low complexity. Over residues 239–263 (ESNGLSNGSTSAANGLDGNASTANL) the composition is skewed to polar residues. 2 stretches are compositionally biased toward acidic residues: residues 453–465 (AMDEDDRDDNSEV) and 471–480 (EEFADDEEAP). Over residues 487-500 (QENKESEQRIKKEM) the composition is skewed to basic and acidic residues. A compositionally biased stretch (acidic residues) spans 513 to 522 (APSENEEDEL). At Ser515 the chain carries Phosphoserine. The span at 523–536 (FGEKKIDEDGERIK) shows a compositional bias: basic and acidic residues. Residues Ser560, Ser562, and Ser571 each carry the phosphoserine modification. Residues 564-583 (IENKENESPVKKEEDSDTLS) show a composition bias toward basic and acidic residues. A compositionally biased stretch (basic residues) spans 584–595 (KSKRSSPKKQQK). Over residues 636–654 (NPQTTKAVDSSNNASNTVP) the composition is skewed to polar residues. Ser655 carries the phosphoserine modification.

This sequence belongs to the TFIIF alpha subunit family. As to quaternary structure, TFIIF is composed of three different subunits: TFG1/RAP74, TFG2/RAP30 and TAF14. In terms of processing, phosphorylated on Ser and other residues by TAF1 and casein kinase II-like kinases.

The protein localises to the nucleus. Functionally, TFIIF is a general transcription initiation factor that binds to RNA polymerase II. Its functions include the recruitment of RNA polymerase II to the promoter bound DNA-TBP-TFIIB complex, decreasing the affinity of RNA polymerase II for non-specific DNA, allowing for the subsequent recruitment of TFIIE and TFIIH, and facilitating RNA polymerase II elongation. This Saccharomyces cerevisiae (strain ATCC 204508 / S288c) (Baker's yeast) protein is Transcription initiation factor IIF subunit alpha (TFG1).